The chain runs to 396 residues: NADH-quinone oxidoreductase subunit D (396 aa).

It belongs to the complex I 49 kDa subunit family. As to quaternary structure, NDH-1 is composed of 14 different subunits. Subunits NuoB, C, D, E, F, and G constitute the peripheral sector of the complex.

It is found in the cell inner membrane. The catalysed reaction is a quinone + NADH + 5 H(+)(in) = a quinol + NAD(+) + 4 H(+)(out). In terms of biological role, NDH-1 shuttles electrons from NADH, via FMN and iron-sulfur (Fe-S) centers, to quinones in the respiratory chain. The immediate electron acceptor for the enzyme in this species is believed to be ubiquinone. Couples the redox reaction to proton translocation (for every two electrons transferred, four hydrogen ions are translocated across the cytoplasmic membrane), and thus conserves the redox energy in a proton gradient. The protein is NADH-quinone oxidoreductase subunit D of Methylobacterium radiotolerans (strain ATCC 27329 / DSM 1819 / JCM 2831 / NBRC 15690 / NCIMB 10815 / 0-1).